The following is a 124-amino-acid chain: S-phase delaying protein 1 (124 aa).

Polar residues predominate over residues 1 to 31 (MHSSKRVMTTKTHVEQPESSMRPQLPESIQG). Positions 1 to 32 (MHSSKRVMTTKTHVEQPESSMRPQLPESIQGS) are disordered.

It belongs to the DIF1/spd1 family. Interacts with cdc22. In terms of processing, ubiquitinated by the DCX(DTL) complex, also named CRL4(CDT2) complex, leading to its degradation.

The protein localises to the cytoplasm. The protein resides in the nucleus. Regulates the ribonucleotide reductase activity through its mediation of the nuclear localization of suc22, the small subunit of the ribonucleotide reductase. Delays the progression of the G1-S phase transition, thereby ensuring the G1 phase is complete. Interacts with both p34 and the p34-p56 complex, although no direct inhibitory effect on the bound proteins has been demonstrated. The action of p14 may happen coincidentally with the cdc10 function or may happen downstream of this. This chain is S-phase delaying protein 1 (spd1), found in Schizosaccharomyces pombe (strain 972 / ATCC 24843) (Fission yeast).